The chain runs to 107 residues: Ribonuclease P protein component 4 (107 aa).

The Zn(2+) site is built by Cys-66, Cys-69, Cys-92, and Cys-95.

The protein belongs to the eukaryotic/archaeal RNase P protein component 4 family. In terms of assembly, consists of a catalytic RNA component and at least 4-5 protein subunits. The cofactor is Zn(2+).

It is found in the cytoplasm. It catalyses the reaction Endonucleolytic cleavage of RNA, removing 5'-extranucleotides from tRNA precursor.. In terms of biological role, part of ribonuclease P, a protein complex that generates mature tRNA molecules by cleaving their 5'-ends. This Methanosarcina barkeri (strain Fusaro / DSM 804) protein is Ribonuclease P protein component 4.